Reading from the N-terminus, the 445-residue chain is Trigger factor (445 aa).

One can recognise a PPIase FKBP-type domain in the interval Gly-162–Thr-247.

It belongs to the FKBP-type PPIase family. Tig subfamily.

It is found in the cytoplasm. The catalysed reaction is [protein]-peptidylproline (omega=180) = [protein]-peptidylproline (omega=0). Involved in protein export. Acts as a chaperone by maintaining the newly synthesized protein in an open conformation. Functions as a peptidyl-prolyl cis-trans isomerase. In Rickettsia rickettsii (strain Sheila Smith), this protein is Trigger factor.